Here is a 938-residue protein sequence, read N- to C-terminus: Myocardin (938 aa).

The MEF2C-binding signature appears at 12–27 (IRSKFRSVLQLRLQQR). One copy of the RPEL 1 repeat lies at 18–43 (SVLQLRLQQRRTQEQLANQGIIPPLK). Over residues 48–61 (FHEQRKHLDSDKAK) the composition is skewed to basic and acidic residues. The segment at 48-68 (FHEQRKHLDSDKAKNSLKRKA) is disordered. RPEL repeat units follow at residues 62-87 (NSLK…QAST) and 106-131 (DDLN…PVDS). Residues 153–205 (FEEDSSSDGLSPDQTRSEDPQNSAGSPPDAKASDTPSTGSLGTNQDLASGSEN) form an HDAC5-binding region. A disordered region spans residues 154–281 (EEDSSSDGLS…DQKAEKSPPP (128 aa)). Polar residues-rich tracts occupy residues 159 to 177 (SDGL…NSAG), 186 to 203 (DTPS…ASGS), and 210 to 220 (SASQPSHQSDA). Over residues 248–265 (NRHKKPKDPKPKVKKLKY) the composition is skewed to basic residues. The SAP domain maps to 371–405 (LDDLKVSELRQQLRIRGLPVSGTKTALMDRLRPFQ). A phosphoserine; by GSK3-beta mark is found at S451, S455, S459, and S463. A coiled-coil region spans residues 516–561 (EKDKMLVEKQKVINELTWKLQQEQRQVEELRMQLQKQKRNNCSEKK). Residues S626, S630, S634, and S638 each carry the phosphoserine; by GSK3-beta modification. Disordered regions lie at residues 635-678 (PQHS…SSPI) and 693-734 (SDKV…MTRS). Residues 699 to 715 (KFSIPSPTFSKSSSAIS) show a composition bias toward low complexity. A required for interaction with and ubiquitination by STUB1 region spans residues 717–938 (VTQPPSYEDA…SSMDLHLQQW (222 aa)). Residues S815, S862, and S869 each carry the phosphoserine; by MAPK1 and MAPK3 modification. The residue at position 896 (T896) is a Phosphothreonine; by MAPK1 and MAPK3.

In terms of assembly, homodimer. Interacts with SRF, its association does not depend on specific DNA sequences for ternary complex formation. Interacts with MLLT7/FOXO4. Interacts (via C-terminal) with EP300 (via the CREB-binding domain). Interacts with HDAC4 and HDAC5. Interacts with MEF2C. Interacts (via C-terminus) with STUB1/CHIP. Interacts with PURB. In terms of processing, ubiquitinated; by STUB1/CHIP at the C-terminus, leading to its degradation by the proteasome. Phosphorylation by GSK3B is required for STUB1/CHIP-mediated ubiquitination. Post-translationally, phosphorylation negatively regulates the intrinsic myocardin transcriptional activity. Phosphorylated; by GSK3B. Expressed in the heart, aorta and bladder. Expressed in smooth muscle cell-containing tissues: stomach, small intestine, colon, lung, placenta and uterus. Very faint expression in prostate and skeletal muscle.

The protein localises to the nucleus. Smooth muscle cells (SM) and cardiac muscle cells-specific transcriptional factor which uses the canonical single or multiple CArG boxes DNA sequence. Acts as a cofactor of serum response factor (SRF) with the potential to modulate SRF-target genes. Plays a crucial role in cardiogenesis, urinary bladder development, and differentiation of the smooth muscle cell lineage (myogenesis). Positively regulates the transcription of genes involved in vascular smooth muscle contraction. In Homo sapiens (Human), this protein is Myocardin (MYOCD).